Here is a 139-residue protein sequence, read N- to C-terminus: Holo-[acyl-carrier-protein] synthase (139 aa).

2 residues coordinate Mg(2+): Asp8 and Glu57.

The protein belongs to the P-Pant transferase superfamily. AcpS family. Requires Mg(2+) as cofactor.

Its subcellular location is the cytoplasm. The enzyme catalyses apo-[ACP] + CoA = holo-[ACP] + adenosine 3',5'-bisphosphate + H(+). In terms of biological role, transfers the 4'-phosphopantetheine moiety from coenzyme A to a Ser of acyl-carrier-protein. The sequence is that of Holo-[acyl-carrier-protein] synthase from Dinoroseobacter shibae (strain DSM 16493 / NCIMB 14021 / DFL 12).